Here is a 483-residue protein sequence, read N- to C-terminus: Trigger factor (483 aa).

The PPIase FKBP-type domain occupies Thr-166 to Pro-251. Residues Gly-435–Met-460 show a composition bias toward basic and acidic residues. The disordered stretch occupies residues Gly-435–Lys-483. Over residues Ala-467–Lys-483 the composition is skewed to low complexity.

The protein belongs to the FKBP-type PPIase family. Tig subfamily.

The protein localises to the cytoplasm. The catalysed reaction is [protein]-peptidylproline (omega=180) = [protein]-peptidylproline (omega=0). Its function is as follows. Involved in protein export. Acts as a chaperone by maintaining the newly synthesized protein in an open conformation. Functions as a peptidyl-prolyl cis-trans isomerase. This is Trigger factor from Mycoplasma mobile (strain ATCC 43663 / 163K / NCTC 11711) (Mesomycoplasma mobile).